A 122-amino-acid chain; its full sequence is MASPKIASLSWGQMKVQGSTLTYKDCKVWPGGSRAWDWRETGTEHSPGVQPADVKEVAEKGVQTLVIGRGMSEALKVPPSTVEYLEKQGIDVRVLQTEQAVKEYNALVAQGVRVGGVFHSTC.

The tract at residues 6-122 (IASLSWGQMK…RVGGVFHSTC (117 aa)) is MTH138-like domain.

The protein belongs to the AAMDC family. Widely expressed, with high expression in the adipose tissue and skeletal muscle (at protein level).

It is found in the cytoplasm. May play a role in preadipocyte differentiation and adipogenesis. The protein is Mth938 domain-containing protein (Aamdc) of Mus musculus (Mouse).